The sequence spans 197 residues: Transcription factor FapR (197 aa).

The protein belongs to the FapR family.

Functionally, transcriptional factor involved in regulation of membrane lipid biosynthesis by repressing genes involved in fatty acid and phospholipid metabolism. This Bacillus cereus (strain B4264) protein is Transcription factor FapR.